We begin with the raw amino-acid sequence, 462 residues long: Squalene synthase ERG9 (462 aa).

A helical transmembrane segment spans residues alanine 406–glycine 426.

Belongs to the phytoene/squalene synthase family. It depends on Mg(2+) as a cofactor.

It is found in the endoplasmic reticulum membrane. The protein localises to the microsome. The enzyme catalyses 2 (2E,6E)-farnesyl diphosphate + NADPH + H(+) = squalene + 2 diphosphate + NADP(+). The catalysed reaction is 2 (2E,6E)-farnesyl diphosphate + NADH + H(+) = squalene + 2 diphosphate + NAD(+). The protein operates within terpene metabolism; lanosterol biosynthesis; lanosterol from farnesyl diphosphate: step 1/3. It participates in steroid metabolism; ergosterol biosynthesis. Squalene synthase; part of the third module of ergosterol biosynthesis pathway that includes the late steps of the pathway. ERG9 produces squalene from 2 farnesyl pyrophosphate moieties. The third module or late pathway involves the ergosterol synthesis itself through consecutive reactions that mainly occur in the endoplasmic reticulum (ER) membrane. Firstly, the squalene synthase ERG9 catalyzes the condensation of 2 farnesyl pyrophosphate moieties to form squalene, which is the precursor of all steroids. Squalene synthase is crucial for balancing the incorporation of farnesyl diphosphate (FPP) into sterol and nonsterol isoprene synthesis. Secondly, squalene is converted into lanosterol by the consecutive action of the squalene epoxidase ERG1 and the lanosterol synthase ERG7. Then, the delta(24)-sterol C-methyltransferase ERG6 methylates lanosterol at C-24 to produce eburicol. Eburicol is the substrate of the sterol 14-alpha demethylase encoded by CYP51A, CYP51B and CYP51C, to yield 4,4,24-trimethyl ergosta-8,14,24(28)-trienol. CYP51B encodes the enzyme primarily responsible for sterol 14-alpha-demethylation, and plays an essential role in ascospore formation. CYP51A encodes an additional sterol 14-alpha-demethylase, induced on ergosterol depletion and responsible for the intrinsic variation in azole sensitivity. The third CYP51 isoform, CYP51C, does not encode a sterol 14-alpha-demethylase, but is required for full virulence on host wheat ears. The C-14 reductase ERG24 then reduces the C14=C15 double bond which leads to 4,4-dimethylfecosterol. A sequence of further demethylations at C-4, involving the C-4 demethylation complex containing the C-4 methylsterol oxidases ERG25, the sterol-4-alpha-carboxylate 3-dehydrogenase ERG26 and the 3-keto-steroid reductase ERG27, leads to the production of fecosterol via 4-methylfecosterol. ERG28 has a role as a scaffold to help anchor ERG25, ERG26 and ERG27 to the endoplasmic reticulum. The C-8 sterol isomerase ERG2 then catalyzes the reaction which results in unsaturation at C-7 in the B ring of sterols and thus converts fecosterol to episterol. The sterol-C5-desaturases ERG3A and ERG3BB then catalyze the introduction of a C-5 double bond in the B ring to produce 5-dehydroepisterol. The C-22 sterol desaturases ERG5A and ERG5B further convert 5-dehydroepisterol into ergosta-5,7,22,24(28)-tetraen-3beta-ol by forming the C-22(23) double bond in the sterol side chain. Finally, ergosta-5,7,22,24(28)-tetraen-3beta-ol is substrate of the C-24(28) sterol reductase ERG4 to produce ergosterol. This chain is Squalene synthase ERG9, found in Gibberella zeae (strain ATCC MYA-4620 / CBS 123657 / FGSC 9075 / NRRL 31084 / PH-1) (Wheat head blight fungus).